The chain runs to 625 residues: Probable inactive receptor kinase At5g16590 (625 aa).

Residues 1 to 23 (MKNKTNLGLSVFFFFICLVSVTS) form the signal peptide. LRR repeat units follow at residues 88-111 (KLET…ANLT), 112-134 (LLRY…LFTL), 136-158 (NIIR…VNSA), 160-182 (RLAT…KIKL), and 183-204 (QQFN…SGMP). Residues 246–266 (AIVGIVIGCFVLLLVLFLIVF) traverse the membrane as a helical segment. Residues 343–613 (KASAEVLGKG…PEVTRLIEEV (271 aa)) form the Protein kinase domain. Serine 345 is modified (phosphoserine). ATP contacts are provided by residues 349–357 (LGKGTFGSS) and lysine 371. Serine 422 is subject to Phosphoserine. Residues threonine 442 and threonine 496 each carry the phosphothreonine modification. Position 517 is a phosphoserine (serine 517). The residue at position 593 (threonine 593) is a Phosphothreonine. 2 positions are modified to phosphoserine: serine 619 and serine 624.

Belongs to the protein kinase superfamily. Ser/Thr protein kinase family.

Its subcellular location is the cell membrane. Might be involved in early recognition of growth promoting fungi. Appears to be specific for P.indica. The chain is Probable inactive receptor kinase At5g16590 from Arabidopsis thaliana (Mouse-ear cress).